An 87-amino-acid chain; its full sequence is Apoptosis inducing factor BLCAP B (87 aa).

The next 2 helical transmembrane spans lie at 19–39 (PALW…FLLE) and 43–63 (CTIC…SCWG).

It belongs to the BLCAP family.

It localises to the cytoplasm. The protein localises to the nucleus. The protein resides in the membrane. Its function is as follows. Acts as a tumor suppressor; induces growth arrest at G(1)/S checkpoint and apoptosis via RB1-dependent and p53/TP53- and NF-kappa-B-independent mechanisms. Modulates expression of genes involved in the regulation of proliferation, cell cycle and apoptosis. This Xenopus laevis (African clawed frog) protein is Apoptosis inducing factor BLCAP B (blcap-b).